A 590-amino-acid chain; its full sequence is PWWP domain-containing protein 2B (590 aa).

Disordered regions lie at residues 52-110, 182-347, 360-398, and 426-467; these read APLP…PPLP, KSTL…EHEP, YLRD…PQGP, and DSLD…TVPP. The residue at position 84 (Ser-84) is a Phosphoserine. The span at 99–110 shows a compositional bias: pro residues; sequence PEPPPPLVPPLP. 2 positions are modified to phosphoserine: Ser-186 and Ser-206. The span at 208–217 shows a compositional bias: basic and acidic residues; that stretch reads PDRELRKPEE. Position 250 is a phosphoserine (Ser-250). Residues 296-305 are compositionally biased toward basic and acidic residues; sequence VLDRESRDRP. A compositionally biased stretch (low complexity) spans 376 to 385; the sequence is GLADLSSGSS. At Ser-447 the chain carries Phosphoserine. In terms of domain architecture, PWWP spans 490–550; sequence VGDIVWGKIH…ISKLSPFSEF (61 aa).

As to quaternary structure, component of a MTA1-specific subcomplex of the NuRD complex composed of PWWP2B, MTA1 and HDAC1 but does not contain CHD4 and MBD3. Interacts with MTA1 and HDAC1. Interacts with MTA2, MTA3, HDAC2, RBBP4, RBBP7, BRCC3 and ZNF516. Does not interact with CHD4 and MBD3. Post-translationally, deubiquitinated by BRCC3; leading to its stabilization.

Functionally, chromatin-binding protein that acts as an adapter between distinct nucleosome components (H3K36me3 or H2A.Z) and chromatin-modifying complexes, contributing to the regulation of the levels of histone acetylation at actively transcribed genes. Competes with CHD4 and MBD3 for interaction with MTA1 to form a NuRD subcomplex, preventing the formation of full NuRD complex (containing CHD4 and MBD3), leading to recruitment of HDACs to gene promoters resulting in turn in the deacetylation of nearby H3K27 and H2A.Z. Plays a role in facilitating transcriptional elongation through regulation of histone acetylation. Negatively regulates brown adipocyte thermogenesis by interacting with and stabilizing HDAC1 at the UCP1 gene promoter, thereby promoting histone deacetylation at the promoter leading to the repression of UCP1 expression. The polypeptide is PWWP domain-containing protein 2B (PWWP2B) (Homo sapiens (Human)).